Reading from the N-terminus, the 623-residue chain is MTFKDFDAEEKLFLRRVIVAFGVVVVCFGILIFNLYNLQIRQHHYYTTRSNENDIKMLPVAPTRGIIYDRNGIPLVRNVTWYDIAVTPYKIADMDALLKQLTPIVDLSPDDISDFRRALKSSSRYRPVVLKNALTDVEIARFAVNQFHFNGVTINSYQDRQYPYGAELAHVLGYVSKINDNDLKALDKKGLAENYAADHNIGKQGIERYYENDLHGKTGYQEVEVDNHGRIVRLLKDVPPIAGKNIHLTLDLHLQEYIESLLAGQRAAVLVEDPHDGSVLAMVSMPSYDPNPFVKGISYQDYGKLLHDKNLPLINRVTQGLYPPASTVKPYMAMSALLCGIITPQTTFFGAPTWTLPGTQRHYRDWKKTGHGMLDVTKAIEESADTFFYQVAYMMGIDRIDTMLSQFGYGKPTGIDLNEEYDGLLPSRAWKQRVHKKAWYQGDTISVGIGQGYWIATPIQMVKAMVALINNGKVIAPHLLLNEESGKTVVPYRPSGTPAQIADPASPYWGLVRQAMYGMANAPNGTGYKFFHTAPYGIAAKSGTSQVFSLKENQTYNAKMIPIRLRDHVFYTAFAPYKNPKVAIALILENGGSDGVTAAPIMRKILDHLFDPQADTTQPDQAP.

The helical transmembrane segment at 17–37 (VIVAFGVVVVCFGILIFNLYN) threads the bilayer. Ser326 acts as the Acyl-ester intermediate in catalysis.

The protein belongs to the transpeptidase family. MrdA subfamily.

The protein localises to the cell inner membrane. It carries out the reaction Preferential cleavage: (Ac)2-L-Lys-D-Ala-|-D-Ala. Also transpeptidation of peptidyl-alanyl moieties that are N-acyl substituents of D-alanine.. Its pathway is cell wall biogenesis; peptidoglycan biosynthesis. In terms of biological role, catalyzes cross-linking of the peptidoglycan cell wall. This Salmonella typhimurium (strain SL1344) protein is Peptidoglycan D,D-transpeptidase MrdA.